The chain runs to 693 residues: Elongation factor G (693 aa).

A tr-type G domain is found at E8–T282. Residues A17–T24, D81–H85, and N135–D138 contribute to the GTP site.

Belongs to the TRAFAC class translation factor GTPase superfamily. Classic translation factor GTPase family. EF-G/EF-2 subfamily.

The protein resides in the cytoplasm. Catalyzes the GTP-dependent ribosomal translocation step during translation elongation. During this step, the ribosome changes from the pre-translocational (PRE) to the post-translocational (POST) state as the newly formed A-site-bound peptidyl-tRNA and P-site-bound deacylated tRNA move to the P and E sites, respectively. Catalyzes the coordinated movement of the two tRNA molecules, the mRNA and conformational changes in the ribosome. The sequence is that of Elongation factor G from Ruminiclostridium cellulolyticum (strain ATCC 35319 / DSM 5812 / JCM 6584 / H10) (Clostridium cellulolyticum).